Reading from the N-terminus, the 910-residue chain is E3 ubiquitin-protein ligase HUL5 (910 aa).

N-acetylmethionine is present on Met1. A disordered region spans residues 1 to 25; the sequence is MLNFTGQTRRRNVNLGNRTRNSKKD. In terms of domain architecture, HECT spans 810–910; sequence YGGYKEEDQT…INSGARFDLS (101 aa). Cys878 (glycyl thioester intermediate) is an active-site residue.

It belongs to the UBE3C family. Interacts with 19S proteasomes.

It is found in the cytoplasm. The protein resides in the cytosol. The protein localises to the nucleus. The catalysed reaction is S-ubiquitinyl-[E2 ubiquitin-conjugating enzyme]-L-cysteine + [acceptor protein]-L-lysine = [E2 ubiquitin-conjugating enzyme]-L-cysteine + N(6)-ubiquitinyl-[acceptor protein]-L-lysine.. It participates in protein modification; protein ubiquitination. In terms of biological role, non-essential E3 ubiquitin-protein ligase that specifically catalyzes 'Lys-29'- and 'Lys-48'-linked polyubiquitin chains. Accepts ubiquitin from an E2 ubiquitin-conjugating enzyme in the form of a thioester and then directly transfers the ubiquitin to targeted substrates. Associates with the proteasome and promotes elongation of ubiquitin chains on substrates bound to the proteasome. Elongation of ubiquitin chains on substrates bound to the proteasome promotes proteasomal processivity. Also promotes ubiquitin elongation of 26S proteasome subunit RPN10. Involved in the stress response required to maintain cell fitness following heat-shock: acts by mediating ubiquitination of cytosolic misfolded proteins, leading to their subsequent degradation. The protein is E3 ubiquitin-protein ligase HUL5 of Saccharomyces cerevisiae (strain ATCC 204508 / S288c) (Baker's yeast).